We begin with the raw amino-acid sequence, 209 residues long: Ribosomal RNA large subunit methyltransferase E (209 aa).

Gly63, Trp65, Asp83, Asp99, and Asp124 together coordinate S-adenosyl-L-methionine. The active-site Proton acceptor is the Lys164.

It belongs to the class I-like SAM-binding methyltransferase superfamily. RNA methyltransferase RlmE family.

Its subcellular location is the cytoplasm. It catalyses the reaction uridine(2552) in 23S rRNA + S-adenosyl-L-methionine = 2'-O-methyluridine(2552) in 23S rRNA + S-adenosyl-L-homocysteine + H(+). Functionally, specifically methylates the uridine in position 2552 of 23S rRNA at the 2'-O position of the ribose in the fully assembled 50S ribosomal subunit. The sequence is that of Ribosomal RNA large subunit methyltransferase E from Vibrio campbellii (strain ATCC BAA-1116).